Reading from the N-terminus, the 469-residue chain is MRHKRSTKRVKRASATQLYRTCKAAGTCPPDVIPKVEGNTVADQILKYGSMAVFFGGLGIGSGSGTGGRSGYVPLGTTPPTAATNIPIRPPVTVESIPLDTIGPLDSSIVSLVEETSFIESGAPVVTPRVPPTTGFTITTSTDTTPAILDVTSISTHDNPTFTDPSVLHPPTPAETSGHFVLSSSSISTHNYEEIPMDTFIVSTDSNNITNSTPIPGSRPTTRLGLYSKGTQQVKVVDPAFMTSPAKLITYDNPAYEGLNPDTTLQFEHEDISLAPDPDFMDIIALHRPALTSRKGTIRYSRVGNKRTMHTRSGKAIGARVHYYQDLSSITEDIELQPLQHVPSSLPHTTVSTSLNDGMFDIYAPIDTEEDIIFSASSNNTLYTTSNTAYVPSNTTIPLSSGYDIPITAGPDIVFNSNTITNTVLPVPTGPIYSIIADGGDFYLHPSYYLLKRRRKRIPYFFADVSVAV.

The Nuclear localization signal motif lies at methionine 1–alanine 13. A disulfide bridge connects residues cysteine 22 and cysteine 28. Residues leucine 450–isoleucine 458 carry the Nuclear localization signal motif.

This sequence belongs to the papillomaviridae L2 protein family. Interacts with major capsid protein L1. Interacts with E2; this interaction inhibits E2 transcriptional activity but not the DNA replication function E2. Interacts with host GADD45GIP1. Interacts with host HSPA8; this interaction is required for L2 nuclear translocation. Interacts with host importins KPNB2 and KPNB3. Forms a complex with importin alpha2-beta1 heterodimers via interaction with the importin alpha2 adapter. Interacts with host DYNLT1; this interaction is essential for virus intracellular transport during entry. Interacts (via C-terminus) with host retromer subunits VPS35 and VPS29. In terms of processing, highly phosphorylated.

The protein localises to the virion. It localises to the host nucleus. It is found in the host early endosome. Its subcellular location is the host Golgi apparatus. Minor protein of the capsid that localizes along the inner surface of the virion, within the central cavities beneath the L1 pentamers. Plays a role in capsid stabilization through interaction with the major capsid protein L1. Once the virion enters the host cell, L2 escorts the genomic DNA into the nucleus by promoting escape from the endosomal compartments and traffic through the host Golgi network. Mechanistically, the C-terminus of L2 possesses a cell-penetrating peptide that protudes from the host endosome, interacts with host cytoplasmic retromer cargo and thereby mediates the capsid delivery to the host trans-Golgi network. Plays a role through its interaction with host dynein in the intracellular microtubule-dependent transport of viral capsid toward the nucleus. Mediates the viral genome import into the nucleus through binding to host importins. Once within the nucleus, L2 localizes viral genomes to host PML bodies in order to activate early gene expression for establishment of infection. Later on, promotes late gene expression by interacting with the viral E2 protein and by inhibiting its transcriptional activation functions. During virion assembly, encapsidates the genome by direct interaction with the viral DNA. The sequence is that of Minor capsid protein L2 from Human papillomavirus 35.